The chain runs to 190 residues: Nucleoside triphosphate pyrophosphatase (190 aa).

The active-site Proton acceptor is Asp-69.

This sequence belongs to the Maf family. A divalent metal cation is required as a cofactor.

The protein resides in the cytoplasm. The catalysed reaction is a ribonucleoside 5'-triphosphate + H2O = a ribonucleoside 5'-phosphate + diphosphate + H(+). It catalyses the reaction a 2'-deoxyribonucleoside 5'-triphosphate + H2O = a 2'-deoxyribonucleoside 5'-phosphate + diphosphate + H(+). In terms of biological role, nucleoside triphosphate pyrophosphatase. May have a dual role in cell division arrest and in preventing the incorporation of modified nucleotides into cellular nucleic acids. The chain is Nucleoside triphosphate pyrophosphatase from Helicobacter pylori (strain Shi470).